We begin with the raw amino-acid sequence, 495 residues long: ATP synthase subunit beta, chloroplastic (495 aa).

172–179 provides a ligand contact to ATP; that stretch reads GGAGVGKT.

This sequence belongs to the ATPase alpha/beta chains family. In terms of assembly, F-type ATPases have 2 components, CF(1) - the catalytic core - and CF(0) - the membrane proton channel. CF(1) has five subunits: alpha(3), beta(3), gamma(1), delta(1), epsilon(1). CF(0) has four main subunits: a(1), b(1), b'(1) and c(9-12).

The protein resides in the plastid. It localises to the chloroplast thylakoid membrane. It catalyses the reaction ATP + H2O + 4 H(+)(in) = ADP + phosphate + 5 H(+)(out). Its function is as follows. Produces ATP from ADP in the presence of a proton gradient across the membrane. The catalytic sites are hosted primarily by the beta subunits. The protein is ATP synthase subunit beta, chloroplastic of Bowiea volubilis (Climbing onion).